Reading from the N-terminus, the 180-residue chain is 4-hydroxy-3-methylbut-2-enyl diphosphate reductase (180 aa).

C12 lines the [4Fe-4S] cluster pocket. Residues H41 and H74 each coordinate (2E)-4-hydroxy-3-methylbut-2-enyl diphosphate. The dimethylallyl diphosphate site is built by H41 and H74. Positions 41 and 74 each coordinate isopentenyl diphosphate. C96 is a [4Fe-4S] cluster binding site. Residue H124 coordinates (2E)-4-hydroxy-3-methylbut-2-enyl diphosphate. Position 124 (H124) interacts with dimethylallyl diphosphate. Residue H124 coordinates isopentenyl diphosphate. Catalysis depends on E126, which acts as the Proton donor. Residue T168 participates in (2E)-4-hydroxy-3-methylbut-2-enyl diphosphate binding.

Belongs to the IspH family. [4Fe-4S] cluster is required as a cofactor.

It carries out the reaction isopentenyl diphosphate + 2 oxidized [2Fe-2S]-[ferredoxin] + H2O = (2E)-4-hydroxy-3-methylbut-2-enyl diphosphate + 2 reduced [2Fe-2S]-[ferredoxin] + 2 H(+). The catalysed reaction is dimethylallyl diphosphate + 2 oxidized [2Fe-2S]-[ferredoxin] + H2O = (2E)-4-hydroxy-3-methylbut-2-enyl diphosphate + 2 reduced [2Fe-2S]-[ferredoxin] + 2 H(+). The protein operates within isoprenoid biosynthesis; dimethylallyl diphosphate biosynthesis; dimethylallyl diphosphate from (2E)-4-hydroxy-3-methylbutenyl diphosphate: step 1/1. It participates in isoprenoid biosynthesis; isopentenyl diphosphate biosynthesis via DXP pathway; isopentenyl diphosphate from 1-deoxy-D-xylulose 5-phosphate: step 6/6. Catalyzes the conversion of 1-hydroxy-2-methyl-2-(E)-butenyl 4-diphosphate (HMBPP) into a mixture of isopentenyl diphosphate (IPP) and dimethylallyl diphosphate (DMAPP). Acts in the terminal step of the DOXP/MEP pathway for isoprenoid precursor biosynthesis. This Pseudomonas fluorescens protein is 4-hydroxy-3-methylbut-2-enyl diphosphate reductase.